Here is a 397-residue protein sequence, read N- to C-terminus: Flavohemoprotein (397 aa).

One can recognise a Globin domain in the interval 4–140 (SFSPHTITLI…IANLLKDREA (137 aa)). Residue His87 participates in heme b binding. Catalysis depends on charge relay system residues Tyr97 and Glu139. The interval 151–397 (GGWIHWRRFV…FGPMDEEMAA (247 aa)) is reductase. The FAD-binding FR-type domain maps to 154 to 258 (IHWRRFVISK…TPPVGDFFLP (105 aa)). Residues Tyr192 and 207–210 (RNYS) contribute to the FAD site. 271 to 276 (GVGLTP) is a binding site for NADP(+). FAD is bound at residue 387 to 390 (FFGP).

The protein belongs to the globin family. Two-domain flavohemoproteins subfamily. This sequence in the C-terminal section; belongs to the flavoprotein pyridine nucleotide cytochrome reductase family. It depends on heme b as a cofactor. FAD serves as cofactor.

It carries out the reaction 2 nitric oxide + NADPH + 2 O2 = 2 nitrate + NADP(+) + H(+). The catalysed reaction is 2 nitric oxide + NADH + 2 O2 = 2 nitrate + NAD(+) + H(+). Its function is as follows. Is involved in NO detoxification in an aerobic process, termed nitric oxide dioxygenase (NOD) reaction that utilizes O(2) and NAD(P)H to convert NO to nitrate, which protects the bacterium from various noxious nitrogen compounds. Therefore, plays a central role in the inducible response to nitrosative stress. The polypeptide is Flavohemoprotein (Xylella fastidiosa (strain 9a5c)).